An 89-amino-acid polypeptide reads, in one-letter code: MLMEDGGLDTTSEEYRKLSKAERRKRRRATPKYRNLHATRERIRVESFNMAFSQLRALLPTLPVEKKLSKIEILRFSIAYISFLDNLLQ.

Positions 1–32 (MLMEDGGLDTTSEEYRKLSKAERRKRRRATPK) are disordered. The segment covering 22–32 (ERRKRRRATPK) has biased composition (basic residues). Residues 32 to 45 (KYRNLHATRERIRV) are basic motif. One can recognise a bHLH domain in the interval 32–84 (KYRNLHATRERIRVESFNMAFSQLRALLPTLPVEKKLSKIEILRFSIAYISFL). The interval 46–84 (ESFNMAFSQLRALLPTLPVEKKLSKIEILRFSIAYISFL) is helix-loop-helix motif.

As to expression, expressed in sensory head neurons of the lateral ganglion.

Its subcellular location is the nucleus. Its function is as follows. Transcription factor which binds the E box motif 5'-CA[TC][AG]TG-3'. Involved in modulating physiological aging, probably by regulating expression of branched-chain amino acid transferase-1, bcat-1. This Caenorhabditis elegans protein is Helix-loop-helix protein 15.